The sequence spans 216 residues: uncharacterized protein (216 aa).

4Fe-4S ferredoxin-type domains lie at 160-189 (DDKP…IDEK) and 188-216 (EKPK…ALLP). Positions 169, 172, 175, 179, 197, 200, 203, and 207 each coordinate [4Fe-4S] cluster.

It belongs to the FrhG family.

This is an uncharacterized protein from Methanocaldococcus jannaschii (strain ATCC 43067 / DSM 2661 / JAL-1 / JCM 10045 / NBRC 100440) (Methanococcus jannaschii).